We begin with the raw amino-acid sequence, 246 residues long: Azurocidin (246 aa).

The first 19 residues, 1–19 (MPALRFLALLASLLATSRV), serve as a signal peptide directing secretion. Positions 20–26 (GLATLAD) are excised as a propeptide. One can recognise a Peptidase S1 domain in the interval 27–242 (IVGGRRAQPQ…FRNWIDSVLN (216 aa)). A disulfide bond links Cys52 and Cys68. 2 N-linked (GlcNAc...) asparagine glycosylation sites follow: Asn139 and Asn170. Intrachain disulfides connect Cys148/Cys205 and Cys178/Cys184. A propeptide spanning residues 245–246 (PA) is cleaved from the precursor.

Belongs to the peptidase S1 family. Elastase subfamily.

It is found in the cytoplasmic granule membrane. Functionally, this is a neutrophil granule-derived antibacterial and monocyte- and fibroblast-specific chemotactic glycoprotein. Binds heparin. This chain is Azurocidin, found in Sus scrofa (Pig).